The chain runs to 248 residues: Large ribosomal subunit protein uL10m (248 aa).

A mitochondrion-targeting transit peptide spans 1–24 (MATLIQRSLSLAKSSTPALQFLRF).

It belongs to the universal ribosomal protein uL10 family. Component of the mitochondrial ribosome large subunit (39S) which comprises a 16S rRNA and about 50 distinct proteins.

It localises to the mitochondrion. This chain is Large ribosomal subunit protein uL10m (mRpL10), found in Drosophila melanogaster (Fruit fly).